A 338-amino-acid polypeptide reads, in one-letter code: Lipoate-protein ligase A (338 aa).

The BPL/LPL catalytic domain occupies 29–216 (PATQRVLFLW…AFFAHYGERV (188 aa)). Residues R71, 76 to 79 (GAVF), and K134 each bind ATP. A (R)-lipoate-binding site is contributed by K134.

Belongs to the LplA family. As to quaternary structure, monomer.

The protein localises to the cytoplasm. The enzyme catalyses L-lysyl-[lipoyl-carrier protein] + (R)-lipoate + ATP = N(6)-[(R)-lipoyl]-L-lysyl-[lipoyl-carrier protein] + AMP + diphosphate + H(+). It participates in protein modification; protein lipoylation via exogenous pathway; protein N(6)-(lipoyl)lysine from lipoate: step 1/2. It functions in the pathway protein modification; protein lipoylation via exogenous pathway; protein N(6)-(lipoyl)lysine from lipoate: step 2/2. Catalyzes both the ATP-dependent activation of exogenously supplied lipoate to lipoyl-AMP and the transfer of the activated lipoyl onto the lipoyl domains of lipoate-dependent enzymes. The sequence is that of Lipoate-protein ligase A from Salmonella paratyphi C (strain RKS4594).